Here is a 197-residue protein sequence, read N- to C-terminus: Isopentenyl-diphosphate Delta-isomerase (197 aa).

Residues His41 and His48 each contribute to the Mn(2+) site. Residues 46–183 (QLHRAFSVFL…SWFMTVLDAA (138 aa)) enclose the Nudix hydrolase domain. Residue Cys83 is part of the active site. Cys83 provides a ligand contact to Mg(2+). Mn(2+) is bound at residue His85. Glu103 is a binding site for Mg(2+). Mn(2+) is bound by residues Glu130 and Glu132. Residue Glu132 is part of the active site.

The protein belongs to the IPP isomerase type 1 family. The cofactor is Mg(2+). Mn(2+) is required as a cofactor.

It is found in the cytoplasm. It carries out the reaction isopentenyl diphosphate = dimethylallyl diphosphate. It functions in the pathway isoprenoid biosynthesis; dimethylallyl diphosphate biosynthesis; dimethylallyl diphosphate from isopentenyl diphosphate: step 1/1. Its function is as follows. Catalyzes the 1,3-allylic rearrangement of the homoallylic substrate isopentenyl (IPP) to its highly electrophilic allylic isomer, dimethylallyl diphosphate (DMAPP). The sequence is that of Isopentenyl-diphosphate Delta-isomerase from Streptomyces avermitilis (strain ATCC 31267 / DSM 46492 / JCM 5070 / NBRC 14893 / NCIMB 12804 / NRRL 8165 / MA-4680).